The chain runs to 216 residues: Soluble inorganic pyrophosphatase 3 (216 aa).

The segment covering 1–10 (MSEEAYEETQ) has biased composition (acidic residues). The segment at 1 to 21 (MSEEAYEETQESSQSPRPVPK) is disordered. Residues Lys-66 and Arg-80 each contribute to the substrate site. Tyr-88 serves as the catalytic Proton donor. Position 92 (Tyr-92) interacts with substrate. Asp-102, Asp-107, and Asp-139 together coordinate Mg(2+). Position 176 (Tyr-176) interacts with substrate.

Belongs to the PPase family. Requires Mg(2+) as cofactor. In terms of tissue distribution, expressed preferentially in stamen, pollen and flower, and at a low level in lateral roots and root elongation zones.

It is found in the cytoplasm. It carries out the reaction diphosphate + H2O = 2 phosphate + H(+). The protein is Soluble inorganic pyrophosphatase 3 of Arabidopsis thaliana (Mouse-ear cress).